Here is a 1336-residue protein sequence, read N- to C-terminus: Adhesion G protein-coupled receptor A2 (1336 aa).

Residues 1-33 (MGAGGRRMPVPPARLLLLPLLPCLLLLAPGTRG) form the signal peptide. The Extracellular portion of the chain corresponds to 34–769 (APGCPVPIRG…AGGSGAGLHP (736 aa)). Residues N84 and N101 are each glycosylated (N-linked (GlcNAc...) asparagine). LRR repeat units follow at residues 85–106 (GTITLLLSNNKITGLRNGSFLG), 109–130 (LLEKLDLRSNVISTVQPGAFLG), 133–154 (ELKRLDLSNNRIGCLTSETFQG), and 157–178 (RLLRLNISGNIYSSLQPGVFDE). An N-linked (GlcNAc...) asparagine glycan is attached at N162. The LRRCT domain maps to 190–241 (EFLTCDCRLRWLLPWARNHSLQLSERTLCAYPSALHAHALSSLQESQLRCEG). The Ig-like domain occupies 247–344 (THYLIPSLRQ…GNTSKKVEIV (98 aa)). Residues C268 and C328 are joined by a disulfide bond. N-linked (GlcNAc...) asparagine glycosylation is present at N275. The RGD motif lies at 362–364 (RGD). A GAIN-B domain is found at 594–757 (FRCTTGRPNI…AVLMELNAFP (164 aa)). Residues N602, N691, and N735 are each glycosylated (N-linked (GlcNAc...) asparagine). The GPS stretch occupies residues 711–757 (AAWWNQDGPGGWSSEGCRLRYSQPNVSSLYCQHLGNVAVLMELNAFP). C727 and C741 are joined by a disulfide. The helical transmembrane segment at 770–790 (VVYPCTALLLLCLFSTIITYI) threads the bilayer. Over 791-805 (LNHSSIHVSRKGWHM) the chain is Cytoplasmic. Residues 806–826 (LLNLCFHMAMTSAVFVGGVTL) traverse the membrane as a helical segment. Residues 827 to 830 (TNYQ) lie on the Extracellular side of the membrane. A helical transmembrane segment spans residues 831-851 (MVCQAVGITLHYSSLSSLLWM). The Cytoplasmic portion of the chain corresponds to 852-884 (GVKARVLHKELSWRAPPLEEGEAAPPGPRPMLR). Residues 885 to 905 (FYLIAGGIPLIICGITAAVNI) form a helical membrane-spanning segment. At 906–922 (HNYRDHSPYCWLVWRPS) the chain is on the extracellular side. Residues 923 to 943 (LGAFYIPVALILPITWIYFLC) traverse the membrane as a helical segment. Topologically, residues 944 to 1016 (AGLHLRSHVA…DGVYSPGVQL (73 aa)) are cytoplasmic. Residues 1017-1037 (GALMTTHFLYLAMWACGALAV) form a helical membrane-spanning segment. Residues 1038-1044 (SQRWLPR) are Extracellular-facing. Residues 1045–1065 (VVCSCLYGVAASALGLFVFTH) traverse the membrane as a helical segment. Residues 1066-1336 (HCARRRDVRA…TGLWKSETTV (271 aa)) are Cytoplasmic-facing. Residues 1084–1095 (ASPSASHVPARA) are compositionally biased toward low complexity. A disordered region spans residues 1084–1310 (ASPSASHVPA…NGAPKGGKYE (227 aa)). S1104 bears the Phosphoserine mark. Positions 1110–1124 (GPASLKSSPSGSSGR) are enriched in low complexity. Residues 1133–1143 (TNLQVAQSQVC) show a composition bias toward polar residues. Residues 1166-1186 (PRHHNNLHHGRRVHKSRAKGH) show a composition bias toward basic residues. The segment covering 1213–1234 (SSESGSLHNSPSDSYPGSSRNS) has biased composition (polar residues). Residues 1333–1336 (ETTV) carry the PDZ-binding motif.

The protein belongs to the G-protein coupled receptor 2 family. Adhesion G-protein coupled receptor (ADGR) subfamily. Interacts with RECK; the interaction is direct. Interacts (via PDZ-binding motif) with DLG1 (via PDZ domains). The cleaved extracellular subunit interacts with the integrin heterodimer ITGAV:ITGB3. Post-translationally, glycosylated. Proteolytically cleaved into two subunits, an extracellular subunit and a seven-transmembrane subunit. Cleaved by thrombin (F2) and MMP1. Also cleaved by MMP9, with lower efficiency. Presence of the protein disulfide-isomerase P4HB at the cell surface is additionally required for shedding of the extracellular subunit, suggesting that the subunits are linked by disulfide bonds. Shedding is enhanced by the growth factor FGF2 and may promote cell survival during angiogenesis. Abundantly expressed in the vasculature of the developing embryo. Expression in normal adult tissues is specifically vascular with endothelial expression in CNS, including brain and retina and more widespread pericyte expression in the brain and organs, including the kidney, pancreas and corpus luteum.

The protein localises to the cell membrane. It is found in the cell projection. The protein resides in the filopodium. Endothelial receptor which functions together with RECK to enable brain endothelial cells to selectively respond to Wnt7 signals (WNT7A or WNT7B). Plays a key role in Wnt7-specific responses, such as endothelial cell sprouting and migration in the forebrain and neural tube, and establishment of the blood-brain barrier. Acts as a Wnt7-specific coactivator of canonical Wnt signaling: required to deliver RECK-bound Wnt7 to frizzled by assembling a higher-order RECK-ADGRA2-Fzd-LRP5-LRP6 complex. ADGRA2-tethering function does not rely on its G-protein coupled receptor (GPCR) structure but instead on its combined capacity to interact with RECK extracellularly and recruit the Dishevelled scaffolding protein intracellularly. Binds to the glycosaminoglycans heparin, heparin sulfate, chondroitin sulfate and dermatan sulfate. The polypeptide is Adhesion G protein-coupled receptor A2 (Mus musculus (Mouse)).